The chain runs to 86 residues: MTRFVLFISCFFLIGMIVECKDGYLMEYGGCKMSCLMKKGTFCAEECTRMKGKDGYCYAWLACYCYNMPDWVKIWNRATNKCGKRK.

The first 20 residues, 1–20, serve as a signal peptide directing secretion; sequence MTRFVLFISCFFLIGMIVEC. Residues 21 to 83 form the LCN-type CS-alpha/beta domain; sequence KDGYLMEYGG…IWNRATNKCG (63 aa). 4 cysteine pairs are disulfide-bonded: cysteine 31–cysteine 82, cysteine 35–cysteine 57, cysteine 43–cysteine 63, and cysteine 47–cysteine 65. Position 82 is a cysteine amide (cysteine 82).

It belongs to the long (4 C-C) scorpion toxin superfamily. Sodium channel inhibitor family. Beta subfamily. Expressed by the venom gland.

The protein localises to the secreted. Beta toxins bind voltage-independently at site-4 of sodium channels (Nav) and shift the voltage of activation toward more negative potentials thereby affecting sodium channel activation and promoting spontaneous and repetitive firing. This toxin shows moderate inhibition of Nav1.1/SCN1A, Nav1.2/SCN2A, and Nav1.4/SCN4A, and promotes a left voltage shift on these channels. It exhibits similar potency on Nav1.2/SCN2A and Nav1.4/SCN4A (40-50% peak current inhibition at 0.5 uM), and weaker inhibition on Nav1.2 (20-30% peak current inhibition at 0.5 uM). The sequence is that of Beta-toxin To4 from Tityus obscurus (Amazonian scorpion).